The chain runs to 116 residues: CDKN2AIP N-terminal-like protein (116 aa).

N-acetylmethionine is present on Met1. Positions Ala24–Ser116 constitute an XRN2-binding (XTBD) domain.

Belongs to the CARF family. Interacts with XRN2; the interaction is direct.

The polypeptide is CDKN2AIP N-terminal-like protein (Cdkn2aipnl) (Rattus norvegicus (Rat)).